A 415-amino-acid chain; its full sequence is Phosphoglycerate kinase (415 aa).

Substrate-binding positions include 27–29 (DVN), Arg44, 67–70 (HQGR), Arg124, and Arg164. ATP-binding positions include Glu336 and 362-365 (GGHM).

This sequence belongs to the phosphoglycerate kinase family. Monomer.

It is found in the cytoplasm. It catalyses the reaction (2R)-3-phosphoglycerate + ATP = (2R)-3-phospho-glyceroyl phosphate + ADP. Its pathway is carbohydrate degradation; glycolysis; pyruvate from D-glyceraldehyde 3-phosphate: step 2/5. This is Phosphoglycerate kinase from Sulfolobus acidocaldarius (strain ATCC 33909 / DSM 639 / JCM 8929 / NBRC 15157 / NCIMB 11770).